A 359-amino-acid polypeptide reads, in one-letter code: UDP-3-O-acylglucosamine N-acyltransferase (359 aa).

The active-site Proton acceptor is histidine 247.

The protein belongs to the transferase hexapeptide repeat family. LpxD subfamily. Homotrimer.

It carries out the reaction a UDP-3-O-[(3R)-3-hydroxyacyl]-alpha-D-glucosamine + a (3R)-hydroxyacyl-[ACP] = a UDP-2-N,3-O-bis[(3R)-3-hydroxyacyl]-alpha-D-glucosamine + holo-[ACP] + H(+). Its pathway is bacterial outer membrane biogenesis; LPS lipid A biosynthesis. Catalyzes the N-acylation of UDP-3-O-acylglucosamine using 3-hydroxyacyl-ACP as the acyl donor. Is involved in the biosynthesis of lipid A, a phosphorylated glycolipid that anchors the lipopolysaccharide to the outer membrane of the cell. The polypeptide is UDP-3-O-acylglucosamine N-acyltransferase (Chlorobium chlorochromatii (strain CaD3)).